The primary structure comprises 359 residues: Peptide chain release factor 1 (359 aa).

Residue Gln-235 is modified to N5-methylglutamine.

The protein belongs to the prokaryotic/mitochondrial release factor family. In terms of processing, methylated by PrmC. Methylation increases the termination efficiency of RF1.

It localises to the cytoplasm. Functionally, peptide chain release factor 1 directs the termination of translation in response to the peptide chain termination codons UAG and UAA. In Nitrosomonas europaea (strain ATCC 19718 / CIP 103999 / KCTC 2705 / NBRC 14298), this protein is Peptide chain release factor 1.